A 221-amino-acid polypeptide reads, in one-letter code: Pectate lyase C (221 aa).

An N-terminal signal peptide occupies residues 1 to 28 (MKRLAGTVILSGLLVCGFGQALPEKALA).

It belongs to the polysaccharide lyase 3 family. Ca(2+) is required as a cofactor.

The protein resides in the secreted. The catalysed reaction is Eliminative cleavage of (1-&gt;4)-alpha-D-galacturonan to give oligosaccharides with 4-deoxy-alpha-D-galact-4-enuronosyl groups at their non-reducing ends.. It carries out the reaction Eliminative cleavage of (1-&gt;4)-alpha-D-galacturonan methyl ester to give oligosaccharides with 4-deoxy-6-O-methyl-alpha-D-galact-4-enuronosyl groups at their non-reducing ends.. It participates in glycan metabolism; pectin degradation; 2-dehydro-3-deoxy-D-gluconate from pectin: step 2/5. In terms of biological role, catalyzes the depolymerization of both polygalacturonate and pectins of methyl esterification degree from 22 to 89%, with an endo mode of action. In contrast to the majority of pectate lyases, displays high activity on highly methylated pectins. The sequence is that of Pectate lyase C (pelC) from Bacillus licheniformis (strain ATCC 14580 / DSM 13 / JCM 2505 / CCUG 7422 / NBRC 12200 / NCIMB 9375 / NCTC 10341 / NRRL NRS-1264 / Gibson 46).